A 298-amino-acid polypeptide reads, in one-letter code: Tyrosine recombinase XerC (298 aa).

The Core-binding (CB) domain maps to 1–84 (MNHIQEAFLN…TLRTFYEYWM (84 aa)). Positions 105–286 (YLPQFFYEEE…SNQQLRKVYL (182 aa)) constitute a Tyr recombinase domain. Residues arginine 145, lysine 169, histidine 238, arginine 241, and histidine 264 contribute to the active site. Catalysis depends on tyrosine 273, which acts as the O-(3'-phospho-DNA)-tyrosine intermediate.

Belongs to the 'phage' integrase family. XerC subfamily. In terms of assembly, forms a cyclic heterotetrameric complex composed of two molecules of XerC and two molecules of XerD.

Its subcellular location is the cytoplasm. Functionally, site-specific tyrosine recombinase, which acts by catalyzing the cutting and rejoining of the recombining DNA molecules. The XerC-XerD complex is essential to convert dimers of the bacterial chromosome into monomers to permit their segregation at cell division. It also contributes to the segregational stability of plasmids. The sequence is that of Tyrosine recombinase XerC from Staphylococcus aureus (strain MRSA252).